A 321-amino-acid polypeptide reads, in one-letter code: Sideroflexin-3 (321 aa).

N-acetylmethionine is present on methionine 1. The next 4 helical transmembrane spans lie at 146-164 (LGTA…ALGL), 174-194 (LVGR…NIPL), 225-245 (IFQV…IPPV), and 266-286 (LQVG…CALF).

The protein belongs to the sideroflexin family.

It localises to the mitochondrion membrane. It catalyses the reaction L-serine(in) = L-serine(out). In terms of biological role, mitochondrial serine transporter that mediates transport of serine into mitochondria, an important step of the one-carbon metabolism pathway. Mitochondrial serine is converted to glycine and formate, which then exits to the cytosol where it is used to generate the charged folates that serve as one-carbon donors. In Rattus norvegicus (Rat), this protein is Sideroflexin-3 (Sfxn3).